We begin with the raw amino-acid sequence, 722 residues long: Lysophospholipid acyltransferase 6 (722 aa).

The next 5 membrane-spanning stretches (helical) occupy residues 25–45, 62–84, 104–123, 180–200, and 243–263; these read MVGL…ALFL, LRHT…QQAI, IVQR…VHLM, ALEY…PLVF, and KVVG…IYPV. Active-site residues include N349 and H381. 3 helical membrane passes run 378–398, 424–444, and 452–472; these read AVWH…AVVV, ILTC…FVLL, and LYLR…FILP. Polar residues-rich tracts occupy residues 485–511 and 549–570; these read NGNG…STAA and VEQP…QQQP. Disordered regions lie at residues 485–582 and 650–687; these read NGNG…PTCA and NGAI…DLHP.

Belongs to the membrane-bound acyltransferase family.

It is found in the endoplasmic reticulum. The protein localises to the membrane. It carries out the reaction a 1-acyl-sn-glycero-3-phospho-L-serine + an acyl-CoA = a 1,2-diacyl-sn-glycero-3-phospho-L-serine + CoA. The catalysed reaction is 1-(9Z-octadecenoyl)-sn-glycero-3-phospho-L-serine + (9Z)-hexadecenoyl-CoA = 1-(9Z-octadecenoyl)-2-(9Z-hexadecenoyl)-sn-glycero-3-phospho-L-serine + CoA. The enzyme catalyses 1-(9Z-octadecenoyl)-sn-glycero-3-phospho-L-serine + (9Z)-octadecenoyl-CoA = 1,2-di-(9Z)-octadecenoyl-sn-glycero-3-phospho-L-serine + CoA. It catalyses the reaction a 1-acyl-sn-glycero-3-phosphocholine + an acyl-CoA = a 1,2-diacyl-sn-glycero-3-phosphocholine + CoA. It carries out the reaction 1-hexadecanoyl-sn-glycero-3-phosphocholine + (9Z)-octadecenoyl-CoA = 1-hexadecanoyl-2-(9Z-octadecenoyl)-sn-glycero-3-phosphocholine + CoA. The catalysed reaction is (9Z)-hexadecenoyl-CoA + 1-hexadecanoyl-sn-glycero-3-phosphocholine = 1-hexadecanoyl-2-(9Z-hexadecenoyl)-sn-glycero-3-phosphocholine + CoA. The enzyme catalyses a 1-acyl-sn-glycero-3-phosphoethanolamine + an acyl-CoA = a 1,2-diacyl-sn-glycero-3-phosphoethanolamine + CoA. It catalyses the reaction 1-hexadecanoyl-sn-glycero-3-phosphoethanolamine + (9Z)-octadecenoyl-CoA = 1-hexadecanoyl-2-(9Z-octadecenoyl)-sn-glycero-3-phosphoethanolamine + CoA. It carries out the reaction 1-hexadecanoyl-sn-glycero-3-phosphoethanolamine + (9Z,12Z)-octadecadienoyl-CoA = 1-hexadecanoyl-2-(9Z,12Z-octadecadienoyl)-sn-glycero-3-phosphoethanolamine + CoA. The catalysed reaction is 1-hexadecanoyl-sn-glycero-3-phosphoethanolamine + (9Z)-hexadecenoyl-CoA = 1-hexadecanoyl-2-(9Z)-hexadecenoyl-sn-glycero-3-phosphoethanolamine + CoA. The enzyme catalyses 1-(9Z-octadecenoyl)-sn-glycero-3-phospho-(1'-sn-glycerol) + (9Z)-octadecenoyl-CoA = 1,2-di-(9Z-octadecenoyl)-sn-glycero-3-phospho-(1'-sn-glycerol) + CoA. Its pathway is lipid metabolism; phospholipid metabolism. Functionally, acyltransferase with broad-specificity, that mediates the acylation of lysophospholipids to produce phospholipids (glycerophospholipids). Converts lysophosphatidylserine (1-acyl-2-hydroxy-sn-glycero-3-phospho-L-serine or LPS) to phosphatidylserine (1,2-diacyl-sn-glycero-3-phospho-L-serine or PS) (LPSAT activity), lysophosphatidylcholine (1-acyl-sn-glycero-3-phosphocholine or LPC) to phosphatidylcholine (1,2-diacyl-sn-glycero-3-phosphocholine or PC) (LPCAT activity), also lysophosphatidylethanolamine (1-acyl-sn-glycero-3-phosphochethanolamine or LPE) to phosphatidylchethanolamine (LPEAT activity) and lysophosphatidylglycerol (1-acyl-2-hydroxy-sn-glycero-3-phospho-(1'-sn-glycerol) or LPG) to phosphatidylglycerol (1,2-diacyl-sn-glycero-3-phospho-(1'-sn-glycerol) or PG) (LPGAT activity). Has a preference for unsaturated fatty acids of at least 16 carbons such as oleoyl-CoA ((9Z)-octadecenoyl-CoA) and palmitoleoyl-CoA ((9Z)-hexadecenoyl-CoA). Glycerophospholipids are important structural and functional components of cellular membrane, acyl-chain remodeling regulates the molecular species distribution of glycerophospholipids which can affect membrane fluidity and curvature. Essential for fertility and viability together with Nessy protein (Nes). In Drosophila melanogaster (Fruit fly), this protein is Lysophospholipid acyltransferase 6.